A 309-amino-acid polypeptide reads, in one-letter code: Dicarboxylate carrier UCP2 (309 aa).

The Mitochondrial intermembrane portion of the chain corresponds to 1-16 (MVGFKATDVPPTATVK). Solcar repeat units follow at residues 11–106 (PTAT…VKQF), 114–203 (AGIG…IKDT), and 212–297 (DDLP…LKRA). The segment at 16–63 (KFLGAGTAACIADLITFPLDTAKVRLQIQGERQGPMQAAASAQYRGVL) is important for interaction with long-chain fatty acids. Residues 17 to 40 (FLGAGTAACIADLITFPLDTAKVR) form a helical membrane-spanning segment. The Mitochondrial matrix segment spans residues 41–77 (LQIQGERQGPMQAAASAQYRGVLGTILTMVRTEGPRS). Residues 78–103 (LYSGLVAGLQRQMSFASVRIGLYDSV) traverse the membrane as a helical segment. At 104-119 (KQFYTKGSEHAGIGSR) the chain is on the mitochondrial intermembrane side. Residues 120-145 (LLAGSTTGALAVAVAQPTDVVKVRFQ) traverse the membrane as a helical segment. The Mitochondrial matrix segment spans residues 146 to 173 (AQARAGAGRRYQSTVEAYKTIAREEGFR). A helical transmembrane segment spans residues 174-199 (GLWKGTSPNVARNAIVNCAELVTYDL). At 200–217 (IKDTLLKAHLMTDDLPCH) the chain is on the mitochondrial intermembrane side. The chain crosses the membrane as a helical span at residues 218–242 (FTSAFGAGFCTTVIASPVDVVKTRY). The Mitochondrial matrix segment spans residues 243-268 (MNSALGQYSSAGHCALTMLQKEGPQA). Residues 269–294 (FYKGFMPSFLRLGSWNVVMFVTYEQL) traverse the membrane as a helical segment. The segment at 278 to 285 (LRLGSWNV) is important for interaction with long-chain fatty acids. At 295-309 (KRALMAARASREAPF) the chain is on the mitochondrial intermembrane side.

Belongs to the mitochondrial carrier (TC 2.A.29) family. Homotetramer. Adopts an asymmetrical dimer of dimers functional form. Interacts with MICU1 (when methylated); leading to decrease the calcium sensitivity of MICU1.

Its subcellular location is the mitochondrion inner membrane. The enzyme catalyses L-aspartate(out) + phosphate(in) + H(+)(in) = L-aspartate(in) + phosphate(out) + H(+)(out). The catalysed reaction is oxaloacetate(out) + phosphate(in) + H(+)(in) = oxaloacetate(in) + phosphate(out) + H(+)(out). It catalyses the reaction (S)-malate(out) + phosphate(in) + H(+)(in) = (S)-malate(in) + phosphate(out) + H(+)(out). It carries out the reaction malonate(out) + phosphate(in) + H(+)(in) = malonate(in) + phosphate(out) + H(+)(out). The enzyme catalyses sulfate(out) + phosphate(in) + H(+)(in) = sulfate(in) + phosphate(out) + H(+)(out). The catalysed reaction is (S)-malate(out) = (S)-malate(in). It catalyses the reaction L-aspartate(out) = L-aspartate(in). It carries out the reaction phosphate(in) = phosphate(out). The enzyme catalyses chloride(in) = chloride(out). The catalysed reaction is H(+)(in) = H(+)(out). It catalyses the reaction a long-chain fatty acid(out) = a long-chain fatty acid(in). Its function is as follows. Antiporter that exports dicarboxylate intermediates of the Krebs cycle in exchange for phosphate plus a proton across the inner membrane of mitochondria, a process driven by mitochondrial motive force with an overall impact on glycolysis, glutaminolysis and glutathione-dependent redox balance. Continuous export of oxaloacetate and related four-carbon dicarboxylates from mitochondrial matrix into the cytosol negatively regulates the oxidation of acetyl-CoA substrates via the Krebs cycle lowering the ATP/ADP ratio and reactive oxygen species (ROS) production. May mediate inducible proton entry into the mitochondrial matrix affecting ATP turnover as a protection mechanism against oxidative stress. The proton currents are most likely associated with fatty acid flipping across the inner membrane of mitochondria in a metabolic process regulated by free fatty acids and purine nucleotides. Regulates the use of glucose as a source of energy. Required for glucose-induced DRP1-dependent mitochondrial fission and neuron activation in the ventromedial nucleus of the hypothalamus (VMH). This mitochondrial adaptation mechanism modulates the VMH pool of glucose-excited neurons with an impact on systemic glucose homeostasis. Regulates ROS levels and metabolic reprogramming of macrophages during the resolution phase of inflammation. Attenuates ROS production in response to IL33 to preserve the integrity of the Krebs cycle required for persistent production of itaconate and subsequent GATA3-dependent differentiation of inflammation-resolving alternatively activated macrophages. Can unidirectionally transport anions including L-malate, L-aspartate, phosphate and chloride ions. Does not mediate adaptive thermogenesis. This chain is Dicarboxylate carrier UCP2 (UCP2), found in Bos taurus (Bovine).